A 90-amino-acid polypeptide reads, in one-letter code: Small ribosomal subunit protein bS18 (90 aa).

Belongs to the bacterial ribosomal protein bS18 family. Part of the 30S ribosomal subunit. Forms a tight heterodimer with protein bS6.

Binds as a heterodimer with protein bS6 to the central domain of the 16S rRNA, where it helps stabilize the platform of the 30S subunit. This chain is Small ribosomal subunit protein bS18, found in Bordetella petrii (strain ATCC BAA-461 / DSM 12804 / CCUG 43448).